We begin with the raw amino-acid sequence, 294 residues long: UPF0761 membrane protein YPN_0254 (294 aa).

7 helical membrane passes run 44 to 64 (LLSL…FPMF), 67 to 87 (ISIK…GDII), 108 to 128 (GLIV…NIIW), 136 to 156 (LVFS…LVGA), 185 to 205 (VFPL…VPTV), 212 to 232 (ALIG…GFAM), and 246 to 266 (VLAV…IVLL).

It belongs to the UPF0761 family.

The protein localises to the cell inner membrane. This Yersinia pestis bv. Antiqua (strain Nepal516) protein is UPF0761 membrane protein YPN_0254.